Consider the following 879-residue polypeptide: Leucine--tRNA ligase (879 aa).

A 'HIGH' region motif is present at residues 46-56; the sequence is PYPSGALHMGH. Residues 638–642 carry the 'KMSKS' region motif; it reads KMSKS. Lys-641 provides a ligand contact to ATP.

The protein belongs to the class-I aminoacyl-tRNA synthetase family.

Its subcellular location is the cytoplasm. It carries out the reaction tRNA(Leu) + L-leucine + ATP = L-leucyl-tRNA(Leu) + AMP + diphosphate. This is Leucine--tRNA ligase from Xanthomonas campestris pv. campestris (strain 8004).